Consider the following 306-residue polypeptide: Immune protein Tsi7 (306 aa).

Interacts with Tse7.

Its function is as follows. Immunity protein that plays a role in preventing early activation of toxin Tse7. Protects thereby cells from Tse7 DNase activity. The protein is Immune protein Tsi7 of Pseudomonas aeruginosa (strain ATCC 15692 / DSM 22644 / CIP 104116 / JCM 14847 / LMG 12228 / 1C / PRS 101 / PAO1).